We begin with the raw amino-acid sequence, 260 residues long: Snake venom serine protease pallabin-2 (260 aa).

A signal peptide spans 1-18 (MVLIKVLANLLILQLSYA). The propeptide occupies 19–24 (QKSSEL). The region spanning 25 to 251 (IIGGDECNIN…HLDWIENIIA (227 aa)) is the Peptidase S1 domain. 6 cysteine pairs are disulfide-bonded: Cys31–Cys163, Cys50–Cys66, Cys98–Cys258, Cys142–Cys212, Cys174–Cys191, and Cys202–Cys227. The active-site Charge relay system is the His65. Asn103 carries an N-linked (GlcNAc...) asparagine glycan. The active-site Charge relay system is Asp110. Ser206 serves as the catalytic Charge relay system.

The protein belongs to the peptidase S1 family. Snake venom subfamily. In terms of assembly, monomer. Expressed by the venom gland.

The protein resides in the secreted. Its function is as follows. Snake venom serine protease that may act in the hemostasis system of the prey. In Gloydius halys (Chinese water mocassin), this protein is Snake venom serine protease pallabin-2 (JZTHR7).